We begin with the raw amino-acid sequence, 223 residues long: Fibronectin type III domain-containing protein 10 (223 aa).

The N-terminal stretch at 1 to 19 is a signal peptide; that stretch reads MRAPPLLLLLAACAPPSGA. Residues 20–179 lie on the Extracellular side of the membrane; the sequence is AVDPTPPGWE…FTAEPAAMQE (160 aa). Residues 72-168 form the Fibronectin type-III domain; it reads LASAGGSLRA…VVPPELAECV (97 aa). Residues N86 and N109 are each glycosylated (N-linked (GlcNAc...) asparagine). Residues 180-200 traverse the membrane as a helical segment; the sequence is IVVAMTAVGGSICVMLVVICL. Residues 201–223 are Cytoplasmic-facing; that stretch reads LVAYITENLMHPTFRRPSLRRQP.

The protein localises to the membrane. The chain is Fibronectin type III domain-containing protein 10 (Fndc10) from Mus musculus (Mouse).